The following is a 489-amino-acid chain: Aspartyl/glutamyl-tRNA(Asn/Gln) amidotransferase subunit B (489 aa).

It belongs to the GatB/GatE family. GatB subfamily. As to quaternary structure, heterotrimer of A, B and C subunits.

It carries out the reaction L-glutamyl-tRNA(Gln) + L-glutamine + ATP + H2O = L-glutaminyl-tRNA(Gln) + L-glutamate + ADP + phosphate + H(+). The catalysed reaction is L-aspartyl-tRNA(Asn) + L-glutamine + ATP + H2O = L-asparaginyl-tRNA(Asn) + L-glutamate + ADP + phosphate + 2 H(+). Its function is as follows. Allows the formation of correctly charged Asn-tRNA(Asn) or Gln-tRNA(Gln) through the transamidation of misacylated Asp-tRNA(Asn) or Glu-tRNA(Gln) in organisms which lack either or both of asparaginyl-tRNA or glutaminyl-tRNA synthetases. The reaction takes place in the presence of glutamine and ATP through an activated phospho-Asp-tRNA(Asn) or phospho-Glu-tRNA(Gln). The sequence is that of Aspartyl/glutamyl-tRNA(Asn/Gln) amidotransferase subunit B from Polynucleobacter asymbioticus (strain DSM 18221 / CIP 109841 / QLW-P1DMWA-1) (Polynucleobacter necessarius subsp. asymbioticus).